Reading from the N-terminus, the 171-residue chain is MNSIPEGRPTPNLPRTANKRGVARLAAAQALYQMDVAGTGVMEVVAEYEAFRLGKEVDGTQYLDADPQWFRAIVAGVVEDQLKLDPMIHQALTEDWPLSRLDSTLRAILRAGAWELKARKDVPTAVIVSEYVDIAKAFYTEDEPKLVNAVLDRLALVIRGESRGAKPRHKS.

Belongs to the NusB family.

Involved in transcription antitermination. Required for transcription of ribosomal RNA (rRNA) genes. Binds specifically to the boxA antiterminator sequence of the ribosomal RNA (rrn) operons. The polypeptide is Transcription antitermination protein NusB (Brucella suis (strain ATCC 23445 / NCTC 10510)).